The sequence spans 300 residues: tRNA dimethylallyltransferase (300 aa).

G9 to S16 provides a ligand contact to ATP. Substrate is bound at residue T11–S16. An interaction with substrate tRNA region spans residues D34 to Q37.

This sequence belongs to the IPP transferase family. As to quaternary structure, monomer. Mg(2+) is required as a cofactor.

It carries out the reaction adenosine(37) in tRNA + dimethylallyl diphosphate = N(6)-dimethylallyladenosine(37) in tRNA + diphosphate. Its function is as follows. Catalyzes the transfer of a dimethylallyl group onto the adenine at position 37 in tRNAs that read codons beginning with uridine, leading to the formation of N6-(dimethylallyl)adenosine (i(6)A). The chain is tRNA dimethylallyltransferase from Ehrlichia canis (strain Jake).